We begin with the raw amino-acid sequence, 370 residues long: Serine/threonine-protein kinase SAPK5 (370 aa).

The region spanning 4 to 260 (YEPVREIGAG…MGEIKSHPWF (257 aa)) is the Protein kinase domain. ATP contacts are provided by residues 10–18 (IGAGNFGVA) and Lys-33. Catalysis depends on Asp-123, which acts as the Proton acceptor. A disordered region spans residues 312–370 (EAQTVPKPDKPVSGYGWGTDDDDDDQQPAEEEDEEDDYDRTVREVHASVDLDMSNLQIS). The segment covering 330 to 349 (TDDDDDDQQPAEEEDEEDDY) has biased composition (acidic residues). Over residues 350 to 360 (DRTVREVHASV) the composition is skewed to basic and acidic residues.

It belongs to the protein kinase superfamily. Ser/Thr protein kinase family. Post-translationally, may be phosphorylated. Expressed in leaf blades, leaf sheaths and roots. Expressed in shoots and roots of young seedlings.

It localises to the cytoplasm. It is found in the nucleus. The enzyme catalyses L-seryl-[protein] + ATP = O-phospho-L-seryl-[protein] + ADP + H(+). It carries out the reaction L-threonyl-[protein] + ATP = O-phospho-L-threonyl-[protein] + ADP + H(+). Activated by hyperosmotic stress. In terms of biological role, may play a role in signal transduction of hyperosmotic response. In Oryza sativa subsp. japonica (Rice), this protein is Serine/threonine-protein kinase SAPK5 (SAPK5).